The primary structure comprises 340 residues: Acidic endochitinase WIN6 (340 aa).

The first 22 residues, 1 to 22 (MSVWALFAFFSLFLSLSVRGSA), serve as a signal peptide directing secretion. The 41-residue stretch at 23-63 (EQCGRQAGDALCPGGLCCSSYGWCGTTVDYCGIGCQSQCDG) folds into the Chitin-binding type-1 domain. 4 cysteine pairs are disulfide-bonded: cysteine 25–cysteine 40, cysteine 34–cysteine 46, cysteine 39–cysteine 53, and cysteine 57–cysteine 61. Positions 64–85 (GGGGDGGDDGCDGGDDGGGDGD) are spacer. The chitinase stretch occupies residues 86-340 (DGYLSDIIPK…YGLSGLKDTM (255 aa)). 3 disulfides stabilise this stretch: cysteine 110–cysteine 172, cysteine 183–cysteine 191, and cysteine 290–cysteine 323. The Proton donor role is filled by glutamate 154.

It belongs to the glycosyl hydrolase 19 family. Chitinase class I subfamily.

The catalysed reaction is Random endo-hydrolysis of N-acetyl-beta-D-glucosaminide (1-&gt;4)-beta-linkages in chitin and chitodextrins.. Functionally, defense against chitin-containing fungal pathogens. The sequence is that of Acidic endochitinase WIN6 (WIN6) from Populus trichocarpa (Western balsam poplar).